The following is a 618-amino-acid chain: MFDLEYQLKNLPDKPGVYLMKNNLGEIIYVGKAKILKNRVRQYFQKSQKHSEKVKAMVKNIEEFEYIITDSEIEALILECNLIKKYRPKYNILLKDDKHYPFIKVTLAEDFPRVISTRKVTKDGSKYFGPYVDGSSVKDIIELIKKTFPIRTCKKNIVEGAKAIRPCLNYQIGLCKAPCAQYIKKSEYREIIDDVIKLLSGKHLDIVENFKLNMEKAAGNLEFEKAAMLRDKINIIEKIGEKQKIILNNFDNEDYISLYSDGKDTCFQVFFLRNGKIVGREHFIIEDTFDTNSSTLISNFLKEFYGGTAYIPKTIYVPNIEDEVLLEQWLTLKKESKSTIKIPIKGEKKNILDLVEKNAKTTLENFKLKYLQEKALYDNVLKDLKNILRLQEEPIRIEAFDISNIQGFDSVGSMVVFEKGRAKPSDYRRFKINTVKGADDYKSMKEILTRRFQHGLSEIKSIQDRKLEFSSGKFSVFPDLILMDGGKGQINIALEVLNTFNINIPVCGMVKDNKHRTRGLIYNGEEIIINKYGSVMKFITRVQDEVHRFAISYHRSLRGKNSFHSLLDDIPNIGEKRKKDLLFNFKSIDNIKKATYEELLSISSMDKKSAESILEFFK.

The region spanning 13 to 92 (DKPGVYLMKN…IKKYRPKYNI (80 aa)) is the GIY-YIG domain. The region spanning 204-239 (LDIVENFKLNMEKAAGNLEFEKAAMLRDKINIIEKI) is the UVR domain.

It belongs to the UvrC family. Interacts with UvrB in an incision complex.

The protein localises to the cytoplasm. Functionally, the UvrABC repair system catalyzes the recognition and processing of DNA lesions. UvrC both incises the 5' and 3' sides of the lesion. The N-terminal half is responsible for the 3' incision and the C-terminal half is responsible for the 5' incision. The chain is UvrABC system protein C from Clostridium botulinum (strain 657 / Type Ba4).